The sequence spans 325 residues: Melanocortin receptor 5 (325 aa).

Topologically, residues 1–37 (MNSSSHLTLLDLTLNASEDNILGQNVNNKSSACEDMG) are extracellular. Asparagine 2, asparagine 15, and asparagine 28 each carry an N-linked (GlcNAc...) asparagine glycan. Residues 38–61 (IAVEVFLTLGLVSLLENILVIGAI) traverse the membrane as a helical segment. At 62-73 (VKNKNLHSPMYF) the chain is on the cytoplasmic side. Residues 74-97 (FVGSLAVADMLVSMSNAWETITIY) form a helical membrane-spanning segment. Residues 98–114 (LINNKHVVIADTFVRHI) lie on the Extracellular side of the membrane. A helical membrane pass occupies residues 115-138 (DNVFDSMICISVVASMCSLLAIAV). The Cytoplasmic portion of the chain corresponds to 139–155 (DRYITIFYALRYHHIMT). Residues 156-179 (ARRSGVIIACIWTFCISCGIVFII) form a helical membrane-spanning segment. The Extracellular portion of the chain corresponds to 180–186 (YYESKYV). A helical transmembrane segment spans residues 187–211 (IVCLISMFFTMLFFMVSLYIHMFLL). Topologically, residues 212–239 (ARNHVKRIAASPRYNSVRQRASMKGAIT) are cytoplasmic. A helical membrane pass occupies residues 240 to 265 (LTMLLGIFIVCWSPFFLHLILMISCP). Residues 266–273 (QNVYCACF) are Extracellular-facing. A helical transmembrane segment spans residues 274-297 (MSYFNMYLILIMCNSVIDPLIYAL). The Cytoplasmic portion of the chain corresponds to 298–325 (RSQEMRRTFKEIICCHGFRRTCTLLGRY). S-palmitoyl cysteine attachment occurs at residues cysteine 311 and cysteine 312.

This sequence belongs to the G-protein coupled receptor 1 family. In terms of tissue distribution, very low expression levels is detected in brain, while high levels are found in adrenals, stomach, lung and spleen.

It is found in the cell membrane. Functionally, receptor for MSH (alpha, beta and gamma) and ACTH. The activity of this receptor is mediated by G proteins which activate adenylate cyclase. This receptor is a possible mediator of the immunomodulation properties of melanocortins. The chain is Melanocortin receptor 5 (Mc5r) from Rattus norvegicus (Rat).